Consider the following 473-residue polypeptide: Glutamate--tRNA ligase (473 aa).

Residues 10–20 (PSPTGYLHLGN) carry the 'HIGH' region motif. Positions 98, 100, 125, and 127 each coordinate Zn(2+). The 'KMSKS' region motif lies at 242 to 246 (KLSKR). Lysine 245 is a binding site for ATP.

The protein belongs to the class-I aminoacyl-tRNA synthetase family. Glutamate--tRNA ligase type 1 subfamily. As to quaternary structure, monomer. The cofactor is Zn(2+).

Its subcellular location is the cytoplasm. It catalyses the reaction tRNA(Glu) + L-glutamate + ATP = L-glutamyl-tRNA(Glu) + AMP + diphosphate. Its function is as follows. Catalyzes the attachment of glutamate to tRNA(Glu) in a two-step reaction: glutamate is first activated by ATP to form Glu-AMP and then transferred to the acceptor end of tRNA(Glu). The protein is Glutamate--tRNA ligase of Aquifex aeolicus (strain VF5).